A 280-amino-acid chain; its full sequence is Large ribosomal subunit protein uL2 (280 aa).

The interval 229 to 280 (DHPHGGGEGKAPIGHPSPLTPWGKPTLGYKTRKKRKPSDRFIIQRANDKKEK) is disordered.

This sequence belongs to the universal ribosomal protein uL2 family. In terms of assembly, part of the 50S ribosomal subunit. Forms a bridge to the 30S subunit in the 70S ribosome.

In terms of biological role, one of the primary rRNA binding proteins. Required for association of the 30S and 50S subunits to form the 70S ribosome, for tRNA binding and peptide bond formation. It has been suggested to have peptidyltransferase activity; this is somewhat controversial. Makes several contacts with the 16S rRNA in the 70S ribosome. This chain is Large ribosomal subunit protein uL2, found in Dictyoglomus turgidum (strain DSM 6724 / Z-1310).